We begin with the raw amino-acid sequence, 135 residues long: HTH-type transcriptional repressor RghR (135 aa).

The HTH cro/C1-type domain maps to Leu-8–Leu-63. The segment at residues Val-19–Asn-38 is a DNA-binding region (H-T-H motif).

Functionally, represses the expression of yvaM and both rapG and rapH. Binds directly to the promoter regions of yvaM, rapG and rapH. The polypeptide is HTH-type transcriptional repressor RghR (rghR) (Bacillus subtilis (strain 168)).